Consider the following 95-residue polypeptide: FXYD domain-containing ion transport regulator 6 (95 aa).

The N-terminal stretch at 1 to 18 (MELVLVFLCSLLAPMVLA) is a signal peptide. The Extracellular segment spans residues 19–35 (SAAEKEKEMDPFHYDYQ). The helical transmembrane segment at 36–57 (TLRIGGLVFAVVLFSVGILLIL) threads the bilayer. At 58 to 95 (SRRCKCSFNQKPRAPGDEEAQVENLITANATEPQKAEN) the chain is on the cytoplasmic side. A disordered region spans residues 69-95 (PRAPGDEEAQVENLITANATEPQKAEN).

Belongs to the FXYD family. As to quaternary structure, regulatory subunit of the sodium/potassium-transporting ATPase which is composed of a catalytic alpha subunit, a non-catalytic beta subunit and an additional regulatory subunit. The regulatory subunit, a member of the FXYD protein family, modulates the enzymatic activity in a tissue- and isoform-specific way by changing affinities of the Na+/K+-ATPase toward Na(+), K(+) or ATP.

Its subcellular location is the cell membrane. Functionally, associates with and regulates the activity of the sodium/potassium-transporting ATPase (NKA) which catalyzes the hydrolysis of ATP coupled with the exchange of Na(+) and K(+) ions across the plasma membrane. Reduces the apparent affinity for intracellular Na(+) with no change in the apparent affinity for extracellular K(+). In addition to modulating NKA kinetics, may also function as a regulator of NKA localization to the plasma membrane. The polypeptide is FXYD domain-containing ion transport regulator 6 (Homo sapiens (Human)).